The primary structure comprises 472 residues: Transmembrane protein 8B (472 aa).

Over residues 1 to 10 (MNMPQSLGTQ) the composition is skewed to low complexity. Residues 1-24 (MNMPQSLGTQPLPPEPPSLGTPIE) are disordered. Residues 1 to 233 (MNMPQSLGTQ…ADALTYGFQL (233 aa)) are Extracellular-facing. Asparagine 100 carries N-linked (GlcNAc...) asparagine glycosylation. In terms of domain architecture, EGF-like spans 182-221 (FLSPCVDDCGPYGQCKLLRTHNYLYAACECKAGWRGWGCT). 3 cysteine pairs are disulfide-bonded: cysteine 186–cysteine 196, cysteine 190–cysteine 209, and cysteine 211–cysteine 220. The helical transmembrane segment at 234–254 (LSTLLLCLSNLMFLPPVVLAI) threads the bilayer. The Cytoplasmic segment spans residues 255-257 (RSR). The chain crosses the membrane as a helical span at residues 258–277 (YVLEAAVYTFTMFFSTFYHA). Residues 278 to 292 (CDQPGIVVFCIMDYD) lie on the Extracellular side of the membrane. Residues 293 to 313 (VLQFCDFLGSLMSVWVTVIAM) traverse the membrane as a helical segment. The Cytoplasmic segment spans residues 314–315 (AR). The helical transmembrane segment at 316 to 336 (LQPVIKQVLYLLGAMLLSMAL) threads the bilayer. Residues 337 to 342 (QLDRHG) are Extracellular-facing. Residues 343–363 (LWNLLGPSLFALGILATAWTV) form a helical membrane-spanning segment. Residues 364–379 (RSVRRRHCYPPTWRRW) are Cytoplasmic-facing. Residues 380–400 (LFYLCPGSLIAGSAVLLYAFV) traverse the membrane as a helical segment. Residues 401–405 (ETRDN) lie on the Extracellular side of the membrane. The helical transmembrane segment at 406-426 (YFYIHSIWHMLIAGSVGFLLP) threads the bilayer. Over 427–472 (PRAKTDRRVPSGARARGCGYQLCINEQEELGLVGPGGTTVSSICVS) the chain is Cytoplasmic.

The protein belongs to the TMEM8 family. May interact with EZR. In terms of processing, N-glycosylated.

It is found in the cell membrane. The protein resides in the cytoplasm. Its subcellular location is the nucleus. It localises to the mitochondrion. The protein localises to the endoplasmic reticulum. May function as a regulator of the EGFR pathway. Probable tumor suppressor which may function in cell growth, proliferation and adhesion. The polypeptide is Transmembrane protein 8B (Tmem8b) (Mus musculus (Mouse)).